Consider the following 248-residue polypeptide: Large ribosomal subunit protein uL10m (248 aa).

A mitochondrion-targeting transit peptide spans 1–24; sequence MATLIQRSLSLAKSSTPALQFLRF.

Belongs to the universal ribosomal protein uL10 family. Component of the mitochondrial ribosome large subunit (39S) which comprises a 16S rRNA and about 50 distinct proteins.

The protein localises to the mitochondrion. The polypeptide is Large ribosomal subunit protein uL10m (mRpL10) (Drosophila melanogaster (Fruit fly)).